Here is a 30-residue protein sequence, read N- to C-terminus: Chassatide C9 (30 aa).

A cross-link (cyclopeptide (Gly-Asn)) is located at residues Gly1–Asn30. 3 disulfide bridges follow: Cys4/Cys20, Cys8/Cys22, and Cys13/Cys27.

This is a cyclic peptide.

Probably participates in a plant defense mechanism. The chain is Chassatide C9 from Chassalia chartacea (Chassalia curviflora).